We begin with the raw amino-acid sequence, 95 residues long: Aspartyl/glutamyl-tRNA(Asn/Gln) amidotransferase subunit C (95 aa).

The protein belongs to the GatC family. As to quaternary structure, heterotrimer of A, B and C subunits.

The catalysed reaction is L-glutamyl-tRNA(Gln) + L-glutamine + ATP + H2O = L-glutaminyl-tRNA(Gln) + L-glutamate + ADP + phosphate + H(+). The enzyme catalyses L-aspartyl-tRNA(Asn) + L-glutamine + ATP + H2O = L-asparaginyl-tRNA(Asn) + L-glutamate + ADP + phosphate + 2 H(+). Functionally, allows the formation of correctly charged Asn-tRNA(Asn) or Gln-tRNA(Gln) through the transamidation of misacylated Asp-tRNA(Asn) or Glu-tRNA(Gln) in organisms which lack either or both of asparaginyl-tRNA or glutaminyl-tRNA synthetases. The reaction takes place in the presence of glutamine and ATP through an activated phospho-Asp-tRNA(Asn) or phospho-Glu-tRNA(Gln). This chain is Aspartyl/glutamyl-tRNA(Asn/Gln) amidotransferase subunit C, found in Maricaulis maris (strain MCS10) (Caulobacter maris).